Here is a 785-residue protein sequence, read N- to C-terminus: Copal-8-ol diphosphate hydratase TPSSA3, chloroplastic (785 aa).

Position 240 (R240) interacts with substrate. Mg(2+) is bound by residues D372 and D374. A DXDD motif motif is present at residues 372–375 (DIDD). R459 serves as a coordination point for substrate.

This sequence belongs to the terpene synthase family. Requires Mg(2+) as cofactor.

The protein localises to the plastid. It is found in the chloroplast. It catalyses the reaction (2E,6E,10E)-geranylgeranyl diphosphate + H2O = 8-hydroxycopalyl diphosphate. The protein operates within secondary metabolite biosynthesis; terpenoid biosynthesis. Its function is as follows. Involved in the biosynthesis of labdane-type diterpenoid including sclareol, a diterpene-diol that is used as fragrance and flavoring, and has anticancer effects (able to kill leukemic and colon cancer cells by apoptosis). Sclareol can also be used as synthesis precursor of ambergris substitution fragance products such as ambrox. Terpene synthase that produces 8-hydroxycopalyl diphosphate from geranylgeranyl diphosphate (GGPP). This is Copal-8-ol diphosphate hydratase TPSSA3, chloroplastic from Salvia sclarea (Clary sage).